Here is a 763-residue protein sequence, read N- to C-terminus: Phospholipid phosphatase-related protein type 4 (763 aa).

The tract at residues 33-54 (VHTSPGGGRRPGQAAGMSAKER) is disordered. The residue at position 36 (S36) is a Phosphoserine. Transmembrane regions (helical) follow at residues 67 to 87 (LPCF…SLYF), 119 to 139 (AIPF…TIMV), and 178 to 198 (FVGV…IIQL). Residues N214 and N219 are each glycosylated (N-linked (GlcNAc...) asparagine). A helical transmembrane segment spans residues 247 to 267 (SFPSQHATLAAFAAVYVSMYF). A glycan (N-linked (GlcNAc...) asparagine) is linked at N268. 2 consecutive transmembrane segments (helical) span residues 276-296 (KLLK…CGLT) and 308-328 (VYCG…YAVG). S346 carries the post-translational modification Phosphoserine. N362 carries an N-linked (GlcNAc...) asparagine glycan. S385 is subject to Phosphoserine. Residue N432 is glycosylated (N-linked (GlcNAc...) asparagine). At S438 the chain carries Phosphoserine. N455 carries N-linked (GlcNAc...) asparagine glycosylation. The tract at residues 458–529 (RKLSLQVIEP…PRVSIQSRPG (72 aa)) is disordered. S461 and S472 each carry phosphoserine. N513, N543, and N568 each carry an N-linked (GlcNAc...) asparagine glycan. S606 carries the post-translational modification Phosphoserine. Residues 669-694 (DSESCESLKDSFGSGDRKRSNIDSNE) are compositionally biased toward basic and acidic residues. Disordered regions lie at residues 669–698 (DSES…HHHH) and 739–763 (ERSN…AYKD). The segment covering 740–749 (RSNSPENTRN) has biased composition (polar residues).

The protein belongs to the PA-phosphatase related phosphoesterase family. O-glycosylated. Probably at Ser-346. As to expression, expressed by glutamatergic neurons (at protein level).

It localises to the postsynaptic density membrane. Its function is as follows. Postsynaptic density membrane protein that indirectly regulates glutamatergic synaptic transmission through lysophosphatidic acid (LPA)-mediated signaling pathways. Binds lysophosphatidic acid (LPA) and mediates its internalization into cells. Could act as receptor or a transporter of this lipid at the post-synaptic membrane. Modulates lysophosphatidic acid (LPA) activity in neuron axonal outgrowth during development by attenuating phospholipid-induced axon collapse. This is Phospholipid phosphatase-related protein type 4 from Homo sapiens (Human).